A 376-amino-acid chain; its full sequence is Natterin-2 (376 aa).

The signal sequence occupies residues 1–18 (MNLSVLLVTLLLLSWTSA). Residues 19-27 (EKDLKVRVA) constitute a propeptide that is removed on maturation.

This sequence belongs to the natterin family. In terms of processing, contains 4 disulfide bonds. As to expression, expressed by the venom gland.

It localises to the secreted. Its activity is regulated as follows. Inhibited by tissue-kallikrein inhibitor TKI and trasylol. Plasma kallikrein inhibitor PKSI527 and classical inhibitors of serine-, metallo-, thiol- or aspartate-peptidases evokes a minor inhibition of the peptide digestion. Functionally, shows nociceptive, edema-inducing and kininogenase activity with release of kallidin from low molecular weight kininogen. The cleavage occurs at Met-Lys bonds. This Thalassophryne nattereri (Copper Joe toadfish) protein is Natterin-2.